The following is a 178-amino-acid chain: Putative pre-16S rRNA nuclease (178 aa).

Composition is skewed to basic and acidic residues over residues M1–R18 and P50–P60. Disordered stretches follow at residues M1–G23 and S36–P60.

Belongs to the YqgF nuclease family.

It localises to the cytoplasm. Could be a nuclease involved in processing of the 5'-end of pre-16S rRNA. The protein is Putative pre-16S rRNA nuclease of Rhodococcus opacus (strain B4).